The chain runs to 161 residues: UPF0262 protein Rru_A2770 (161 aa).

This sequence belongs to the UPF0262 family.

The sequence is that of UPF0262 protein Rru_A2770 from Rhodospirillum rubrum (strain ATCC 11170 / ATH 1.1.1 / DSM 467 / LMG 4362 / NCIMB 8255 / S1).